Reading from the N-terminus, the 276-residue chain is Cholesterol 25-hydroxylase-like protein 1, member 2 (276 aa).

N-linked (GlcNAc...) asparagine glycosylation is present at Asn-30. The next 3 membrane-spanning stretches (helical) occupy residues 39-59 (LFPV…YLSC), 90-110 (GVTL…QWMW), and 126-146 (LVGG…IWHF). A Fatty acid hydroxylase domain is found at 134–265 (LLLFDLQYFI…FSHWDKMFGT (132 aa)). The Histidine box-1 signature appears at 144–148 (WHFLH). The short motif at 159 to 163 (HAIHH) is the Histidine box-2 element. Asn-164 carries an N-linked (GlcNAc...) asparagine glycan. Transmembrane regions (helical) follow at residues 175–195 (CLGG…PVLL) and 199–219 (LLTT…DHCG). Positions 240-246 (KHDVHHQ) match the Histidine box-3 motif.

This sequence belongs to the sterol desaturase family. Fe cation serves as cofactor.

It is found in the endoplasmic reticulum membrane. Functionally, may catalyze the formation of 25-hydroxycholesterol from cholesterol. The chain is Cholesterol 25-hydroxylase-like protein 1, member 2 from Danio rerio (Zebrafish).